Consider the following 427-residue polypeptide: Glutamate-1-semialdehyde 2,1-aminomutase (427 aa).

Lys-265 is subject to N6-(pyridoxal phosphate)lysine.

The protein belongs to the class-III pyridoxal-phosphate-dependent aminotransferase family. HemL subfamily. In terms of assembly, homodimer. It depends on pyridoxal 5'-phosphate as a cofactor.

The protein resides in the cytoplasm. It carries out the reaction (S)-4-amino-5-oxopentanoate = 5-aminolevulinate. Its pathway is porphyrin-containing compound metabolism; protoporphyrin-IX biosynthesis; 5-aminolevulinate from L-glutamyl-tRNA(Glu): step 2/2. This is Glutamate-1-semialdehyde 2,1-aminomutase from Burkholderia ambifaria (strain ATCC BAA-244 / DSM 16087 / CCUG 44356 / LMG 19182 / AMMD) (Burkholderia cepacia (strain AMMD)).